The following is a 129-amino-acid chain: uncharacterized protein (129 aa).

Acidic residues predominate over residues 86–96; the sequence is NDGFSSDDEPE. The tract at residues 86 to 129 is disordered; sequence NDGFSSDDEPEEHVILTEDNQGEPSETPQATFDITEFIKTEDED. Polar residues predominate over residues 103–117; the sequence is EDNQGEPSETPQATF.

Belongs to the asfivirus D129L family.

This is an uncharacterized protein from African swine fever virus (isolate Tick/South Africa/Pretoriuskop Pr4/1996) (ASFV).